Consider the following 124-residue polypeptide: Late histone H2B.2.2 (124 aa).

The tract at residues 1-32 (MPAKQTSGKGAKKAGKAKGRPSGASKTRRRKR) is disordered. A compositionally biased stretch (basic residues) spans 10–19 (GAKKAGKAKG). Residue serine 111 is glycosylated (O-linked (GlcNAc) serine). A Glycyl lysine isopeptide (Lys-Gly) (interchain with G-Cter in ubiquitin) cross-link involves residue lysine 119.

The protein belongs to the histone H2B family. In terms of assembly, the nucleosome is a histone octamer containing two molecules each of H2A, H2B, H3 and H4 assembled in one H3-H4 heterotetramer and two H2A-H2B heterodimers. The octamer wraps approximately 147 bp of DNA. Monoubiquitination of Lys-119 gives a specific tag for epigenetic transcriptional activation and is also prerequisite for histone H3 'Lys-4' and 'Lys-79' methylation. Post-translationally, glcNAcylation at Ser-111 promotes monoubiquitination of Lys-119. It fluctuates in response to extracellular glucose, and associates with transcribed genes.

Its subcellular location is the nucleus. The protein resides in the chromosome. Functionally, core component of nucleosome. Nucleosomes wrap and compact DNA into chromatin, limiting DNA accessibility to the cellular machineries which require DNA as a template. Histones thereby play a central role in transcription regulation, DNA repair, DNA replication and chromosomal stability. DNA accessibility is regulated via a complex set of post-translational modifications of histones, also called histone code, and nucleosome remodeling. This Psammechinus miliaris (Green sea urchin) protein is Late histone H2B.2.2.